Here is a 190-residue protein sequence, read N- to C-terminus: Recombination protein RecR (190 aa).

Residues 58–73 (CEQCGALSENELCEIC) form a C4-type zinc finger. Positions 81-167 (NILCIVESPK…TFSKIAQGIP (87 aa)) constitute a Toprim domain.

It belongs to the RecR family.

May play a role in DNA repair. It seems to be involved in an RecBC-independent recombinational process of DNA repair. It may act with RecF and RecO. The protein is Recombination protein RecR of Campylobacter jejuni subsp. doylei (strain ATCC BAA-1458 / RM4099 / 269.97).